Here is a 320-residue protein sequence, read N- to C-terminus: Thioredoxin reductase (320 aa).

FAD is bound at residue 36 to 43; it reads TGMEQGGQ. An intrachain disulfide couples Cys-136 to Cys-139. 287-296 lines the FAD pocket; it reads DVTDHVYRQA.

The protein belongs to the class-II pyridine nucleotide-disulfide oxidoreductase family. Homodimer. FAD serves as cofactor.

Its subcellular location is the cytoplasm. It carries out the reaction [thioredoxin]-dithiol + NADP(+) = [thioredoxin]-disulfide + NADPH + H(+). This Coxiella burnetii (strain RSA 493 / Nine Mile phase I) protein is Thioredoxin reductase (trxB).